Consider the following 358-residue polypeptide: Isopentenyl-diphosphate delta-isomerase (358 aa).

Residue 12–13 (RK) participates in substrate binding. FMN-binding positions include 69 to 71 (AMT), S99, and N128. Q158 contacts substrate. E159 contacts Mg(2+). FMN is bound by residues K190, T220, 267-269 (GIR), and 288-289 (AG).

Belongs to the IPP isomerase type 2 family. Homooctamer. Dimer of tetramers. The cofactor is FMN. Requires NADPH as cofactor. It depends on Mg(2+) as a cofactor.

The protein localises to the cytoplasm. It catalyses the reaction isopentenyl diphosphate = dimethylallyl diphosphate. In terms of biological role, involved in the biosynthesis of isoprenoids. Catalyzes the 1,3-allylic rearrangement of the homoallylic substrate isopentenyl (IPP) to its allylic isomer, dimethylallyl diphosphate (DMAPP). The chain is Isopentenyl-diphosphate delta-isomerase from Listeria monocytogenes serotype 4b (strain F2365).